The primary structure comprises 204 residues: Leucyl/phenylalanyl-tRNA--protein transferase (204 aa).

The protein belongs to the L/F-transferase family.

The protein localises to the cytoplasm. The catalysed reaction is N-terminal L-lysyl-[protein] + L-leucyl-tRNA(Leu) = N-terminal L-leucyl-L-lysyl-[protein] + tRNA(Leu) + H(+). The enzyme catalyses N-terminal L-arginyl-[protein] + L-leucyl-tRNA(Leu) = N-terminal L-leucyl-L-arginyl-[protein] + tRNA(Leu) + H(+). It carries out the reaction L-phenylalanyl-tRNA(Phe) + an N-terminal L-alpha-aminoacyl-[protein] = an N-terminal L-phenylalanyl-L-alpha-aminoacyl-[protein] + tRNA(Phe). Functions in the N-end rule pathway of protein degradation where it conjugates Leu, Phe and, less efficiently, Met from aminoacyl-tRNAs to the N-termini of proteins containing an N-terminal arginine or lysine. The chain is Leucyl/phenylalanyl-tRNA--protein transferase from Sinorhizobium fredii (strain NBRC 101917 / NGR234).